Consider the following 551-residue polypeptide: E3 ubiquitin-protein ligase TRIM8 (551 aa).

Residues 15 to 56 form an RING-type zinc finger; sequence CPICLHVFVEPVQLPCKHNFCRGCIGEAWAKDSGLVRCPECN. B box-type zinc fingers lie at residues 92–132 and 140–182; these read CVFC…ARGH and VRAW…VCDV. The stretch at 181-249 forms a coiled coil; the sequence is DVEIRRNEIR…HQLLDEDLRQ (69 aa).

It belongs to the TRIM/RBCC family. In terms of assembly, homodimer. Interacts with SOCS1 (via) SH2 domain and SOCS box. Interacts with HSP90AB1; prevents nucleus translocation of phosphorylated STAT3 and HSP90AB1. Interacts with MAP3K7/TAK1. Interacts with PIAS3. Interacts with TICAM1. Interacts with TRIM15; this interaction prevents TRIM8 cytoplasmic translocation. Widely expressed. Expressed in glomerular podocytes of kidneys.

The protein resides in the cytoplasm. Its subcellular location is the nucleus. It is found in the nuclear body. The enzyme catalyses S-ubiquitinyl-[E2 ubiquitin-conjugating enzyme]-L-cysteine + [acceptor protein]-L-lysine = [E2 ubiquitin-conjugating enzyme]-L-cysteine + N(6)-ubiquitinyl-[acceptor protein]-L-lysine.. It functions in the pathway protein modification; protein ubiquitination. Functionally, E3 ubiquitin-protein ligase that participates in multiple biological processes including cell survival, differentiation, apoptosis, and in particular, the innate immune response. Participates in the activation of interferon-gamma signaling by promoting proteasomal degradation of the repressor SOCS1. Plays a positive role in the TNFalpha and IL-1beta signaling pathways. Mechanistically, induces the 'Lys-63'-linked polyubiquitination of MAP3K7/TAK1 component leading to the activation of NF-kappa-B. Also modulates STAT3 activity through negative regulation of PIAS3, either by degradation of PIAS3 through the ubiquitin-proteasome pathway or exclusion of PIAS3 from the nucleus. Negatively regulates TLR3/4-mediated innate immune response by catalyzing 'Lys-6'- and 'Lys-33'-linked polyubiquitination of TICAM1 and thereby disrupting the TICAM1-TBK1 interaction. The protein is E3 ubiquitin-protein ligase TRIM8 (TRIM8) of Homo sapiens (Human).